We begin with the raw amino-acid sequence, 396 residues long: Endo-1,4-beta-xylanase A (396 aa).

Residues 1–28 form the signal peptide; it reads MITLFRKPFVAGLAISLLVGGGIGNVAA. The GH10 domain maps to 51–396; the sequence is AWQVASLSER…VKPAYWRIID (346 aa). E195 functions as the Proton donor in the catalytic mechanism. Catalysis depends on E301, which acts as the Nucleophile.

The protein belongs to the glycosyl hydrolase 10 (cellulase F) family.

The protein resides in the secreted. It catalyses the reaction Endohydrolysis of (1-&gt;4)-beta-D-xylosidic linkages in xylans.. The protein operates within glycan degradation; xylan degradation. This is Endo-1,4-beta-xylanase A (xynA) from Halalkalibacterium halodurans (strain ATCC BAA-125 / DSM 18197 / FERM 7344 / JCM 9153 / C-125) (Bacillus halodurans).